A 170-amino-acid chain; its full sequence is Cytochrome c-type biogenesis protein CcmE (170 aa).

The Cytoplasmic portion of the chain corresponds to 1 to 7 (MTRKQRR). The chain crosses the membrane as a helical; Signal-anchor for type II membrane protein span at residues 8–28 (LTIIGGALFVLAVAAGLVLNA). Topologically, residues 29–170 (LRDSIVFFST…GEKTAAGATQ (142 aa)) are periplasmic. Residues histidine 122 and tyrosine 126 each coordinate heme. Over residues 137–146 (KQGHWKDDYG) the composition is skewed to basic and acidic residues. A disordered region spans residues 137 to 170 (KQGHWKDDYGKPQAAKPGPVSMREGEKTAAGATQ).

This sequence belongs to the CcmE/CycJ family.

The protein resides in the cell inner membrane. Functionally, heme chaperone required for the biogenesis of c-type cytochromes. Transiently binds heme delivered by CcmC and transfers the heme to apo-cytochromes in a process facilitated by CcmF and CcmH. In Bradyrhizobium sp. (strain BTAi1 / ATCC BAA-1182), this protein is Cytochrome c-type biogenesis protein CcmE.